The following is a 564-amino-acid chain: Histone acetyltransferase rtt109 (564 aa).

Acetyl-CoA contacts are provided by residues Phe138, 157 to 159 (HVL), and Trp167. The active-site Proton donor/acceptor is Asp261. Lys263 carries the post-translational modification N6-acetyllysine; by autocatalysis. 2 disordered regions span residues 355 to 420 (YDKV…NAFY) and 506 to 549 (RKKD…ESPG). The segment covering 366–377 (AVSVSTDSQSSD) has biased composition (low complexity). Polar residues-rich tracts occupy residues 394–417 (DPST…TDQN) and 512–521 (SQATTATSAQ). The span at 529–544 (GTVSTAVTAEASTTGT) shows a compositional bias: low complexity.

The protein belongs to the RTT109 family.

It is found in the nucleus. It localises to the vacuole. It carries out the reaction L-lysyl-[protein] + acetyl-CoA = N(6)-acetyl-L-lysyl-[protein] + CoA + H(+). The enzyme catalyses L-lysyl-[histone] + acetyl-CoA = N(6)-acetyl-L-lysyl-[histone] + CoA + H(+). Its function is as follows. Histone chaperone-dependent acetylase that modifies 'Lys-56' of histone H3 (H3K56ac). Histone H3 'Lys-56' acetylation may be required for S-phase-linked DNA damage tolerance. Also acetylates 'Lys-9' of histone H3 (H3K9ac). Autoacetylates. In Aspergillus flavus, this protein is Histone acetyltransferase rtt109.